We begin with the raw amino-acid sequence, 259 residues long: Glandular kallikrein-10 (259 aa).

Residues 1–18 (MWFLILFLALSLGGIDAA) form the signal peptide. Residues 19 to 24 (PPGQSR) constitute a propeptide, activation peptide. Residues 25 to 256 (IVGGYKCEKN…FTSWIKEVMK (232 aa)) enclose the Peptidase S1 domain. 5 disulfide bridges follow: Cys31–Cys171, Cys48–Cys64, Cys150–Cys217, Cys182–Cys196, and Cys207–Cys232. His63 (charge relay system) is an active-site residue. Residues Asn91 and Asn106 are each glycosylated (N-linked (GlcNAc...) asparagine). Residue Asp118 is the Charge relay system of the active site. The active-site Charge relay system is the Ser211.

Belongs to the peptidase S1 family. Kallikrein subfamily. In terms of assembly, heterodimer of a light chain and heavy chain linked by a disulfide bond. Probably N- and O-glycosylated. In terms of tissue distribution, kidney and submandibular gland, where it is found in the granular convoluted tubule and striated duct cells. It is likely that the enzyme is mainly synthesized in the granular convoluted tubules and then transferred to other tissues by release into the vasculature or interstitial space.

It carries out the reaction Preferential cleavage of Arg-|-Xaa bonds in small molecule substrates. Highly selective action to release kallidin (lysyl-bradykinin) from kininogen involves hydrolysis of Met-|-Xaa or Leu-|-Xaa.. Functionally, glandular kallikreins cleave Met-Lys and Arg-Ser bonds in kininogen to release Lys-bradykinin. This protein may be involved in the regulation of renal function. The polypeptide is Glandular kallikrein-10 (Klk10) (Rattus norvegicus (Rat)).